The sequence spans 74 residues: Kappa-scoloptoxin(03)-Ssm1a (74 aa).

Residues 1 to 23 (MNSSIAILLVMALIMFSLDKSYS) form the signal peptide. Intrachain disulfides connect cysteine 32/cysteine 59, cysteine 42/cysteine 58, and cysteine 45/cysteine 68.

The protein belongs to the scoloptoxin-03 family. In terms of tissue distribution, expressed by the venom gland.

It localises to the secreted. In terms of biological role, this toxin inhibits voltage-gated potassium channel currents in DRG neurons (IC(50)=44.2 nM). In vivo, insects injected with this toxin showed signs of neurotoxicity including twitching, paralysis, and body contraction. The chain is Kappa-scoloptoxin(03)-Ssm1a from Scolopendra mutilans (Chinese red-headed centipede).